The primary structure comprises 180 residues: Large ribosomal subunit protein uL5 (180 aa).

It belongs to the universal ribosomal protein uL5 family. As to quaternary structure, part of the 50S ribosomal subunit; part of the 5S rRNA/L5/L18/L25 subcomplex. Contacts the 5S rRNA and the P site tRNA. Forms a bridge to the 30S subunit in the 70S ribosome.

In terms of biological role, this is one of the proteins that bind and probably mediate the attachment of the 5S RNA into the large ribosomal subunit, where it forms part of the central protuberance. In the 70S ribosome it contacts protein S13 of the 30S subunit (bridge B1b), connecting the 2 subunits; this bridge is implicated in subunit movement. Contacts the P site tRNA; the 5S rRNA and some of its associated proteins might help stabilize positioning of ribosome-bound tRNAs. This Brevibacillus brevis (strain 47 / JCM 6285 / NBRC 100599) protein is Large ribosomal subunit protein uL5.